The chain runs to 340 residues: DNA-directed RNA polymerase subunit alpha (340 aa).

The tract at residues 1–226 is alpha N-terminal domain (alpha-NTD); the sequence is MLIAQRPSLT…ELFGLARELN (226 aa). The alpha C-terminal domain (alpha-CTD) stretch occupies residues 243-340; that stretch reads LAADLALPIE…DAGFVETEQY (98 aa).

This sequence belongs to the RNA polymerase alpha chain family. In terms of assembly, homodimer. The RNAP catalytic core consists of 2 alpha, 1 beta, 1 beta' and 1 omega subunit. When a sigma factor is associated with the core the holoenzyme is formed, which can initiate transcription. In terms of processing, the last 19 amino acids in the C-terminal part are cleaved in the spore.

It catalyses the reaction RNA(n) + a ribonucleoside 5'-triphosphate = RNA(n+1) + diphosphate. DNA-dependent RNA polymerase catalyzes the transcription of DNA into RNA using the four ribonucleoside triphosphates as substrates. This Streptomyces granaticolor protein is DNA-directed RNA polymerase subunit alpha.